The sequence spans 75 residues: CLAVATA3/ESR (CLE)-related protein 33 (75 aa).

The signal sequence occupies residues 1–22 (MASWRMLCFVLLFTSILICHDA). Residues proline 67 and proline 70 each carry the hydroxyproline modification. An O-linked (Ara...) hydroxyproline glycan is attached at proline 70.

This sequence belongs to the CLV3/ESR signal peptide family. Post-translationally, the O-glycosylation (arabinosylation) of the hydroxyproline Pro-70 enhances binding affinity of the CLE33p peptide for its receptor. In terms of tissue distribution, expressed in root vasculature.

The protein resides in the secreted. It is found in the extracellular space. Functionally, signaling peptide involved in the regulation of root colonization by arbuscular mycorrhizal (AM) fungi. Moves from root to shoot to function with the receptor kinase SUNN, in a signaling pathway that repress strigolactone biosynthetic genes and strigolactone content in the roots, and consequently reduces the promotion of further colonization by AM fungi. This is CLAVATA3/ESR (CLE)-related protein 33 from Medicago truncatula (Barrel medic).